The chain runs to 146 residues: 3-dehydroquinate dehydratase (146 aa).

Y22 functions as the Proton acceptor in the catalytic mechanism. Substrate is bound by residues N73, H79, and D86. H99 (proton donor) is an active-site residue. Substrate contacts are provided by residues 100 to 101 (IS) and R110.

It belongs to the type-II 3-dehydroquinase family. Homododecamer.

It catalyses the reaction 3-dehydroquinate = 3-dehydroshikimate + H2O. The protein operates within metabolic intermediate biosynthesis; chorismate biosynthesis; chorismate from D-erythrose 4-phosphate and phosphoenolpyruvate: step 3/7. Functionally, catalyzes a trans-dehydration via an enolate intermediate. This chain is 3-dehydroquinate dehydratase, found in Prochlorococcus marinus subsp. pastoris (strain CCMP1986 / NIES-2087 / MED4).